A 275-amino-acid chain; its full sequence is 3-methyl-2-oxobutanoate hydroxymethyltransferase (275 aa).

2 residues coordinate Mg(2+): aspartate 55 and aspartate 94. 3-methyl-2-oxobutanoate-binding positions include 55-56, aspartate 94, and lysine 122; that span reads DS. Glutamate 124 contributes to the Mg(2+) binding site. Catalysis depends on glutamate 191, which acts as the Proton acceptor.

It belongs to the PanB family. As to quaternary structure, homodecamer; pentamer of dimers. It depends on Mg(2+) as a cofactor.

It localises to the cytoplasm. The catalysed reaction is 3-methyl-2-oxobutanoate + (6R)-5,10-methylene-5,6,7,8-tetrahydrofolate + H2O = 2-dehydropantoate + (6S)-5,6,7,8-tetrahydrofolate. Its pathway is cofactor biosynthesis; (R)-pantothenate biosynthesis; (R)-pantoate from 3-methyl-2-oxobutanoate: step 1/2. Its function is as follows. Catalyzes the reversible reaction in which hydroxymethyl group from 5,10-methylenetetrahydrofolate is transferred onto alpha-ketoisovalerate to form ketopantoate. This chain is 3-methyl-2-oxobutanoate hydroxymethyltransferase, found in Marinomonas sp. (strain MWYL1).